Here is a 465-residue protein sequence, read N- to C-terminus: A-type ATP synthase subunit B (465 aa).

It belongs to the ATPase alpha/beta chains family. The A-type ATPase is composed of subunits A(3), B(3), C, D, E(1 or 2), F, H(2), I and proteolipid K(x).

It localises to the cell membrane. Component of the A-type ATP synthase that produces ATP from ADP in the presence of a proton gradient across the membrane. The B chain is a regulatory subunit. This Methanocaldococcus jannaschii (strain ATCC 43067 / DSM 2661 / JAL-1 / JCM 10045 / NBRC 100440) (Methanococcus jannaschii) protein is A-type ATP synthase subunit B.